Here is a 358-residue protein sequence, read N- to C-terminus: Uptake hydrogenase small subunit (358 aa).

Positions 1 to 45 (MSRLETFYDVMRRQGITRRSFLKYCSLTAAALGLGPAFAPRIAHA) form a signal peptide, tat-type signal. The [4Fe-4S] cluster site is built by cysteine 62, cysteine 65, cysteine 160, cysteine 194, histidine 232, cysteine 235, cysteine 260, and cysteine 266. [3Fe-4S] cluster is bound by residues cysteine 275, cysteine 294, and cysteine 297.

It belongs to the [NiFe]/[NiFeSe] hydrogenase small subunit family. Heterodimer of a large and a small subunit. The cofactor is [4Fe-4S] cluster. [3Fe-4S] cluster serves as cofactor. In terms of processing, predicted to be exported by the Tat system. The position of the signal peptide cleavage has been experimentally proven.

The protein resides in the cell membrane. It catalyses the reaction H2 + A = AH2. Its function is as follows. This enzyme recycles the H(2) produced by nitrogenase to increase the production of ATP and to protect nitrogenase against inhibition or damage by O(2) under carbon- or phosphate-limited conditions. The sequence is that of Uptake hydrogenase small subunit (hoxK) from Azotobacter vinelandii.